We begin with the raw amino-acid sequence, 260 residues long: Indole-3-glycerol phosphate synthase (260 aa).

Belongs to the TrpC family.

The catalysed reaction is 1-(2-carboxyphenylamino)-1-deoxy-D-ribulose 5-phosphate + H(+) = (1S,2R)-1-C-(indol-3-yl)glycerol 3-phosphate + CO2 + H2O. Its pathway is amino-acid biosynthesis; L-tryptophan biosynthesis; L-tryptophan from chorismate: step 4/5. The chain is Indole-3-glycerol phosphate synthase from Neisseria gonorrhoeae (strain NCCP11945).